A 387-amino-acid chain; its full sequence is Ferrochelatase (387 aa).

Positions 1 to 318 (MGRVGVLLLN…VFIDALAQMV (318 aa)) are ferrochelatase. Residues histidine 196 and glutamate 277 each contribute to the Fe cation site. The segment at 319-387 (MDSLNDPPCT…QGPLHFVGLL (69 aa)) is hlip domain.

In the N-terminal section; belongs to the ferrochelatase family. This sequence in the C-terminal section; belongs to the Hlip family.

Its subcellular location is the cytoplasm. It catalyses the reaction heme b + 2 H(+) = protoporphyrin IX + Fe(2+). It functions in the pathway porphyrin-containing compound metabolism; protoheme biosynthesis; protoheme from protoporphyrin-IX: step 1/1. Its function is as follows. Catalyzes the ferrous insertion into protoporphyrin IX. In terms of biological role, the Hlip proteins might regulate tetrapyrrole biosynthesis, maybe at the level of aminolevulinic acid synthesis. Deletion of 4 to 5 members of the Hlip family (always including this member) suggests the proteins are involved in regulation of chlorophyll biosynthesis, in stabilization of chlorophyll-binding proteins and/or in reuse of chlorophylls, and may regulate tetrapyrrole biosynthesis. The Hlip proteins probably stabilize PSII assembly intermediates. The sequence is that of Ferrochelatase from Synechocystis sp. (strain ATCC 27184 / PCC 6803 / Kazusa).